A 156-amino-acid chain; its full sequence is Small ribosomal subunit protein uS7 (156 aa).

This sequence belongs to the universal ribosomal protein uS7 family. In terms of assembly, part of the 30S ribosomal subunit. Contacts proteins S9 and S11.

One of the primary rRNA binding proteins, it binds directly to 16S rRNA where it nucleates assembly of the head domain of the 30S subunit. Is located at the subunit interface close to the decoding center, probably blocks exit of the E-site tRNA. This Campylobacter jejuni subsp. jejuni serotype O:6 (strain 81116 / NCTC 11828) protein is Small ribosomal subunit protein uS7.